The sequence spans 316 residues: Aspartate carbamoyltransferase catalytic subunit (316 aa).

Carbamoyl phosphate is bound by residues Arg60 and Thr61. Lys88 is a binding site for L-aspartate. Carbamoyl phosphate-binding residues include Arg110, His138, and Gln141. Arg171 and Arg225 together coordinate L-aspartate. Positions 266 and 267 each coordinate carbamoyl phosphate.

The protein belongs to the aspartate/ornithine carbamoyltransferase superfamily. ATCase family. Heterododecamer (2C3:3R2) of six catalytic PyrB chains organized as two trimers (C3), and six regulatory PyrI chains organized as three dimers (R2).

It catalyses the reaction carbamoyl phosphate + L-aspartate = N-carbamoyl-L-aspartate + phosphate + H(+). The protein operates within pyrimidine metabolism; UMP biosynthesis via de novo pathway; (S)-dihydroorotate from bicarbonate: step 2/3. Catalyzes the condensation of carbamoyl phosphate and aspartate to form carbamoyl aspartate and inorganic phosphate, the committed step in the de novo pyrimidine nucleotide biosynthesis pathway. This Rhizorhabdus wittichii (strain DSM 6014 / CCUG 31198 / JCM 15750 / NBRC 105917 / EY 4224 / RW1) (Sphingomonas wittichii) protein is Aspartate carbamoyltransferase catalytic subunit.